The following is a 454-amino-acid chain: Glutamyl-tRNA reductase (454 aa).

Substrate is bound by residues 49–52 (TCNR), Ser109, 114–116 (ETQ), and Gln120. Cys50 functions as the Nucleophile in the catalytic mechanism. 189 to 194 (GAGKMS) is an NADP(+) binding site. Residues 434–454 (NDKNKQTSSSREQVLVSRFPD) are disordered.

Belongs to the glutamyl-tRNA reductase family. Homodimer.

The catalysed reaction is (S)-4-amino-5-oxopentanoate + tRNA(Glu) + NADP(+) = L-glutamyl-tRNA(Glu) + NADPH + H(+). It functions in the pathway porphyrin-containing compound metabolism; protoporphyrin-IX biosynthesis; 5-aminolevulinate from L-glutamyl-tRNA(Glu): step 1/2. In terms of biological role, catalyzes the NADPH-dependent reduction of glutamyl-tRNA(Glu) to glutamate 1-semialdehyde (GSA). This Brevibacillus brevis (strain 47 / JCM 6285 / NBRC 100599) protein is Glutamyl-tRNA reductase.